Reading from the N-terminus, the 68-residue chain is DNA-directed RNA polymerase subunit Rpo10 (68 aa).

Residues cysteine 7, cysteine 10, cysteine 44, and cysteine 45 each contribute to the Zn(2+) site.

It belongs to the archaeal Rpo10/eukaryotic RPB10 RNA polymerase subunit family. Part of the RNA polymerase complex. Requires Zn(2+) as cofactor.

Its subcellular location is the cytoplasm. It catalyses the reaction RNA(n) + a ribonucleoside 5'-triphosphate = RNA(n+1) + diphosphate. In terms of biological role, DNA-dependent RNA polymerase (RNAP) catalyzes the transcription of DNA into RNA using the four ribonucleoside triphosphates as substrates. The sequence is that of DNA-directed RNA polymerase subunit Rpo10 from Methanococcus maripaludis (strain C5 / ATCC BAA-1333).